Reading from the N-terminus, the 851-residue chain is Nucleolar RNA helicase 2 (851 aa).

The disordered stretch occupies residues 1–260; sequence MPGKLRSGAK…IPVEQKEGAF (260 aa). Phosphoserine occurs at positions 7 and 13. 2 stretches are compositionally biased toward basic and acidic residues: residues 26 to 42 and 99 to 113; these read PSEK…KTEE and EPLE…KEII. At Lys39 the chain carries N6-acetyllysine. Tandem repeats lie at residues 117–153, 154–190, and 191–227. The segment at 117-227 is 3 X 37 AA tandem repeats; sequence PSEEEADMPK…SPRLKDGLSQ (111 aa). At Ser118 the chain carries Phosphoserine. Basic and acidic residues predominate over residues 133 to 145; that stretch reads GKEANGDAGEKSP. Lys134 is modified (N6-acetyllysine). Phosphoserine is present on residues Ser144, Ser155, Ser181, Ser192, Ser218, Ser236, Ser243, Ser244, and Ser245. Residues 170–182 are compositionally biased toward basic and acidic residues; the sequence is GKEANGDAGEKSP. Residues 207–223 show a composition bias toward basic and acidic residues; that stretch reads GKEASGDAGEKSPRLKD. A compositionally biased stretch (polar residues) spans 226 to 237; the sequence is SQPSEPKSNSSD. The segment covering 246–257 has biased composition (basic and acidic residues); that stretch reads ETEKEIPVEQKE. A Q motif motif is present at residues 258–286; sequence GAFSNFPISEETVKLLKARGVNFLFPIQA. Residues 289–468 enclose the Helicase ATP-binding domain; sequence FHHVYSGKDL…KKYMKSTYEQ (180 aa). 302-309 lines the ATP pocket; sequence ARTGTGKT. At Thr368 the chain carries Phosphothreonine. A DEAD box motif is present at residues 411–414; the sequence is DEVD. Positions 501-645 constitute a Helicase C-terminal domain; the sequence is DVIRVYSGHQ…GVPSATEIIK (145 aa). Residue Ser639 is modified to Phosphoserine. Lys672 carries the post-translational modification N6-acetyllysine. Residues 783 to 851 form a disordered region; the sequence is QPELEGPPDG…KRSFSKAFGQ (69 aa). 3 consecutive repeat copies span residues 807 to 811, 817 to 823, and 829 to 833. Residues 807–833 form a 3 X 5 AA repeats region; it reads FRGQRGGSRNFRGQGQRGGSRNFRGQR. An N6-acetyllysine modification is found at Lys847.

The protein belongs to the DEAD box helicase family. DDX21/DDX50 subfamily. Homodimer; homodimerizes via its N-terminus. Found in a multi-helicase-TICAM1 complex at least composed of DHX36, DDX1, DDX21 and TICAM1; this complex exists in resting cells with or without poly(I:C) RNA ligand stimulation. Interacts (via C-terminus) with TICAM1 (via TIR domain). Interacts with DHX36 (via C-terminus); this interaction serves as bridges to TICAM1. Interacts (via C-terminus) with DDX1 (via B30.2/SPRY domain); this interaction serves as bridges to TICAM1. Component of the B-WICH complex, at least composed of SMARCA5/SNF2H, BAZ1B/WSTF, SF3B1, DEK, MYO1C, ERCC6, MYBBP1A and DDX21. Interacts with C1QBP. Interacts with JUN. Interacts with WDR46. Interacts with MCM3AP. Interacts with WDR43. Interacts with KPNA3. Interacts with GID4. Acetylation by CREBBP/CBP inhibits the helicase activity. Deacetylation by SIRT7 promotes the helicase activity and overcomes R-loop-mediated stalling of RNA polymerases. In terms of tissue distribution, highly expressed in liver and testis. Expressed at lower level in brain, lungs, and skeletal muscle.

The protein localises to the nucleus. It is found in the nucleolus. Its subcellular location is the nucleoplasm. The protein resides in the cytoplasm. It localises to the cytosol. The protein localises to the mitochondrion. The catalysed reaction is ATP + H2O = ADP + phosphate + H(+). With respect to regulation, acetylation inhibits the helicase activity. Functionally, RNA helicase that acts as a sensor of the transcriptional status of both RNA polymerase (Pol) I and II: promotes ribosomal RNA (rRNA) processing and transcription from polymerase II (Pol II). Binds various RNAs, such as rRNAs, snoRNAs, 7SK and, at lower extent, mRNAs. In the nucleolus, localizes to rDNA locus, where it directly binds rRNAs and snoRNAs, and promotes rRNA transcription, processing and modification. Required for rRNA 2'-O-methylation, possibly by promoting the recruitment of late-acting snoRNAs SNORD56 and SNORD58 with pre-ribosomal complexes. In the nucleoplasm, binds 7SK RNA and is recruited to the promoters of Pol II-transcribed genes: acts by facilitating the release of P-TEFb from inhibitory 7SK snRNP in a manner that is dependent on its helicase activity, thereby promoting transcription of its target genes. Functions as cofactor for JUN-activated transcription: required for phosphorylation of JUN at 'Ser-77'. Can unwind double-stranded RNA (helicase) and can fold or introduce a secondary structure to a single-stranded RNA (foldase). Together with SIRT7, required to prevent R-loop-associated DNA damage and transcription-associated genomic instability: deacetylation by SIRT7 activates the helicase activity, thereby overcoming R-loop-mediated stalling of RNA polymerases. Involved in rRNA processing. May bind to specific miRNA hairpins. Component of a multi-helicase-TICAM1 complex that acts as a cytoplasmic sensor of viral double-stranded RNA (dsRNA) and plays a role in the activation of a cascade of antiviral responses including the induction of pro-inflammatory cytokines via the adapter molecule TICAM1. In Mus musculus (Mouse), this protein is Nucleolar RNA helicase 2 (Ddx21).